A 367-amino-acid polypeptide reads, in one-letter code: Germination protease (367 aa).

Residues Met1–Asp15 constitute a propeptide that is removed on maturation.

This sequence belongs to the peptidase A25 family. As to quaternary structure, homotetramer. Post-translationally, autoproteolytically processed. The inactive tetrameric zymogen termed p46 autoprocesses to a smaller form termed p41, which is active only during spore germination.

It carries out the reaction Endopeptidase action with P4 Glu or Asp, P1 preferably Glu &gt; Asp, P1' hydrophobic and P2' Ala.. In terms of biological role, initiates the rapid degradation of small, acid-soluble proteins during spore germination. The protein is Germination protease of Bacillus thuringiensis subsp. konkukian (strain 97-27).